The primary structure comprises 233 residues: MIYAQILAGGKGTRMGNVPMPKQFLLLADKPILIHTIEKFTLESRFDAILVVCPADWVSHTEDIIKKYITDERVHVVVGGADRNETLMSGINYIQDHYGIQDDDVVVTHDAVRPFITQRIINDNIVAVLENKAVDTVVPAIDTIVRGANDQVTDIPVRSEMYQGQTPQSFHIKILIDSYNALSSEQKASLSDSCKICSLAGQKVSLVRGENYNFKITTPFDLRVASALVEKRS.

CTP-binding positions include 7–10 (LAGG) and 80–86 (GADRNET).

It belongs to the IspD/TarI cytidylyltransferase family. TarI subfamily.

It catalyses the reaction D-ribitol 5-phosphate + CTP + H(+) = CDP-L-ribitol + diphosphate. Its pathway is cell wall biogenesis; poly(ribitol phosphate) teichoic acid biosynthesis. In terms of biological role, catalyzes the transfer of the cytidylyl group of CTP to D-ribitol 5-phosphate. The protein is Ribitol-5-phosphate cytidylyltransferase of Lactiplantibacillus plantarum (strain ATCC BAA-793 / NCIMB 8826 / WCFS1) (Lactobacillus plantarum).